Here is a 304-residue protein sequence, read N- to C-terminus: uncharacterized protein (304 aa).

The span at 226–244 (SRNSESSRQSNLNSPNDSV) shows a compositional bias: polar residues. The disordered stretch occupies residues 226 to 263 (SRNSESSRQSNLNSPNDSVKFNEFNKSNKSTKTNPNNI). Over residues 246–262 (FNEFNKSNKSTKTNPNN) the composition is skewed to low complexity.

This is an uncharacterized protein from Acanthamoeba polyphaga (Amoeba).